A 492-amino-acid chain; its full sequence is Trypanothione reductase (492 aa).

Residue 36-52 (DVQMVHGPPFFSALGGT) participates in FAD binding. Residues cysteine 53 and cysteine 58 are joined by a disulfide bond. Histidine 461 acts as the Proton acceptor in catalysis.

It belongs to the class-I pyridine nucleotide-disulfide oxidoreductase family. In terms of assembly, homodimer. Requires FAD as cofactor.

The protein resides in the cytoplasm. It catalyses the reaction trypanothione + NADP(+) = trypanothione disulfide + NADPH + H(+). Trypanothione is the parasite analog of glutathione; this enzyme is the equivalent of glutathione reductase. The chain is Trypanothione reductase (TPR) from Trypanosoma cruzi.